A 625-amino-acid polypeptide reads, in one-letter code: Folylpolyglutamate synthase (625 aa).

141–144 provides a ligand contact to ATP; the sequence is GKGS. Mg(2+)-binding residues include S165, E234, and H262. 2 residues coordinate ATP: R384 and D414.

Belongs to the folylpolyglutamate synthase family. Requires a monovalent cation as cofactor.

Its subcellular location is the mitochondrion inner membrane. The protein resides in the mitochondrion matrix. The enzyme catalyses (6S)-5,6,7,8-tetrahydrofolyl-(gamma-L-Glu)(n) + L-glutamate + ATP = (6S)-5,6,7,8-tetrahydrofolyl-(gamma-L-Glu)(n+1) + ADP + phosphate + H(+). It participates in cofactor biosynthesis; tetrahydrofolylpolyglutamate biosynthesis. Its function is as follows. Catalyzes conversion of folates to polyglutamate derivatives allowing concentration of folate compounds in the cell and the intracellular retention of these cofactors, which are important substrates for most of the folate-dependent enzymes that are involved in one-carbon transfer reactions involved in purine, pyrimidine and amino acid synthesis. Essential for organellar and whole-plant folate homeostasis. The polypeptide is Folylpolyglutamate synthase (Arabidopsis thaliana (Mouse-ear cress)).